The chain runs to 261 residues: MFSRICSAQLKRTAWTLPKQAHLQSQTIKTFATAPILCKQFKQSDQPRLRINSDAPNFDADTTVGKINFYDYLGDSWGVLFSHPADFTPVCTTEVSAFAKLKPEFDKRNVKLIGLSVEDVESHEKWIQDIKEIAKVKNVGFPIIGDTFRNVAFLYDMVDAEGFKNINDGSLKTVRSVFVIDPKKKIRLIFTYPSTVGRNTSEVLRVIDALQLTDKEGVVTPINWQPADDVIIPPSVSNDEAKAKFGQFNEIKPYLRFTKSK.

The transit peptide at 1–13 directs the protein to the mitochondrion; it reads MFSRICSAQLKRT. Residues 49–212 form the Thioredoxin domain; the sequence is LRINSDAPNF…VLRVIDALQL (164 aa). A Phosphoserine modification is found at Ser-53. The active-site Cysteine sulfenic acid (-SOH) intermediate is the Cys-91.

It belongs to the peroxiredoxin family. Prx6 subfamily. In terms of assembly, homodimer; disulfide-linked.

The protein resides in the mitochondrion. It catalyses the reaction a hydroperoxide + 2 glutathione = an alcohol + glutathione disulfide + H2O. It carries out the reaction [glutaredoxin]-dithiol + a hydroperoxide = [glutaredoxin]-disulfide + an alcohol + H2O. Functionally, thiol-specific peroxidase that catalyzes the reduction of hydrogen peroxide and organic hydroperoxides to water and alcohols, respectively. Plays a role in cell protection against oxidative stress by detoxifying peroxides and as sensor of hydrogen peroxide-mediated signaling events. Involved in mitochondrial protection of cadmium-induced oxidative stress. This Saccharomyces cerevisiae (strain ATCC 204508 / S288c) (Baker's yeast) protein is Peroxiredoxin PRX1, mitochondrial.